The following is a 293-amino-acid chain: tRNA(His) guanylyltransferase (293 aa).

Mg(2+)-binding residues include Asp-29, Gly-30, and Asp-76. Residues 29 to 34 (DGRGFT) and 75 to 76 (SD) each bind GTP. The disordered stretch occupies residues 226-252 (KKVSEEEAEEMSSSAVPEVKSKSQVEK).

The protein belongs to the tRNA(His) guanylyltransferase family. It depends on Mg(2+) as a cofactor.

The catalysed reaction is a 5'-end ribonucleotide-tRNA(His) + GTP + ATP + H2O = a 5'-end phospho-guanosine-ribonucleotide-tRNA(His) + AMP + 2 diphosphate + H(+). Functionally, adds a GMP to the 5'-end of tRNA(His) after transcription and RNase P cleavage. In Neurospora crassa (strain ATCC 24698 / 74-OR23-1A / CBS 708.71 / DSM 1257 / FGSC 987), this protein is tRNA(His) guanylyltransferase (rgt-1).